The sequence spans 148 residues: Large ribosomal subunit protein bL9 (148 aa).

The protein belongs to the bacterial ribosomal protein bL9 family.

In terms of biological role, binds to the 23S rRNA. This Lachnoclostridium phytofermentans (strain ATCC 700394 / DSM 18823 / ISDg) (Clostridium phytofermentans) protein is Large ribosomal subunit protein bL9.